A 749-amino-acid polypeptide reads, in one-letter code: Semaphorin-3B (749 aa).

Residues 1–24 form the signal peptide; it reads MGRAGAAAVIPGLALLWAVGLGSA. One can recognise a Sema domain in the interval 30–513; the sequence is RLRLSFQELQ…SRSAVAQIAL (484 aa). The N-linked (GlcNAc...) asparagine glycan is linked to asparagine 82. Cysteine 102 and cysteine 113 are oxidised to a cystine. N-linked (GlcNAc...) asparagine glycosylation is present at asparagine 124. 3 cysteine pairs are disulfide-bonded: cysteine 131/cysteine 140, cysteine 269/cysteine 380, and cysteine 293/cysteine 340. Residue asparagine 427 is glycosylated (N-linked (GlcNAc...) asparagine). Cystine bridges form between cysteine 516/cysteine 534 and cysteine 644/cysteine 710. Residues 573–659 enclose the Ig-like C2-type domain; the sequence is PALLEHKVFG…GFTQPLRRLS (87 aa). Residues 702–749 form a disordered region; it reads GSANSLRMCRPQPALQSLPLESRRKGRNRRTHAPEPRAERGPRSATHW. The segment covering 733–743 has biased composition (basic and acidic residues); sequence HAPEPRAERGP.

This sequence belongs to the semaphorin family. Expressed abundantly but differentially in a variety of neural and nonneural tissues.

The protein resides in the secreted. Its subcellular location is the endoplasmic reticulum. In terms of biological role, inhibits axonal extension by providing local signals to specify territories inaccessible for growing axons. This Homo sapiens (Human) protein is Semaphorin-3B (SEMA3B).